The following is an 84-amino-acid chain: Turripeptide IX-01 (84 aa).

An N-terminal signal peptide occupies residues 1–21; the sequence is MGFYMLLTVALLLTSFMSVEA. A propeptide spanning residues 22–39 is cleaved from the precursor; that stretch reads TPVDQAERSAMKESGLAH. 3 disulfide bridges follow: Cys-48–Cys-70, Cys-55–Cys-74, and Cys-60–Cys-81.

In terms of tissue distribution, expressed by the venom duct.

It is found in the secreted. The sequence is that of Turripeptide IX-01 from Gemmula speciosa (Splendid gem-turris).